Reading from the N-terminus, the 441-residue chain is Tol-Pal system protein TolB (441 aa).

Residues 1–39 form the signal peptide; it reads MPAMTPAFRRADLTGFLRTYGAALILLLAAMLAWQPAQA.

This sequence belongs to the TolB family. The Tol-Pal system is composed of five core proteins: the inner membrane proteins TolA, TolQ and TolR, the periplasmic protein TolB and the outer membrane protein Pal. They form a network linking the inner and outer membranes and the peptidoglycan layer.

It is found in the periplasm. Its function is as follows. Part of the Tol-Pal system, which plays a role in outer membrane invagination during cell division and is important for maintaining outer membrane integrity. This chain is Tol-Pal system protein TolB, found in Bordetella bronchiseptica (strain ATCC BAA-588 / NCTC 13252 / RB50) (Alcaligenes bronchisepticus).